A 298-amino-acid polypeptide reads, in one-letter code: Ornithine carbamoyltransferase (298 aa).

Carbamoyl phosphate contacts are provided by residues 50 to 53 (STRT), Q77, R101, and 128 to 131 (HPCQ). Residues N159, D216, and 220–221 (SM) each bind L-ornithine. Residues 256–257 (CL) and R284 each bind carbamoyl phosphate.

This sequence belongs to the aspartate/ornithine carbamoyltransferase superfamily. OTCase family.

It localises to the cytoplasm. It catalyses the reaction carbamoyl phosphate + L-ornithine = L-citrulline + phosphate + H(+). It participates in amino-acid biosynthesis; L-arginine biosynthesis; L-arginine from L-ornithine and carbamoyl phosphate: step 1/3. In terms of biological role, reversibly catalyzes the transfer of the carbamoyl group from carbamoyl phosphate (CP) to the N(epsilon) atom of ornithine (ORN) to produce L-citrulline. The chain is Ornithine carbamoyltransferase from Methylococcus capsulatus (strain ATCC 33009 / NCIMB 11132 / Bath).